The chain runs to 334 residues: HTH-type transcriptional repressor PurR (334 aa).

Positions 2–56 constitute an HTH lacI-type domain; the sequence is ATIKDVAKMAGVSTTTVSHVINKTRHVADETKQTVLDAIKALNYSPSAVARSLKV. Positions 4–23 form a DNA-binding region, H-T-H motif; it reads IKDVAKMAGVSTTTVSHVIN. The DNA-binding element occupies 48 to 56; sequence SAVARSLKV. 5 residues coordinate hypoxanthine: Y73, K189, T191, F220, and D274.

As to quaternary structure, homodimer.

It functions in the pathway purine metabolism; purine nucleotide biosynthesis [regulation]. In terms of biological role, is the main repressor of the genes involved in the de novo synthesis of purine nucleotides, regulating purB, purC, purEK, purF, purHD, purL, purMN and guaBA expression. PurR is allosterically activated to bind its cognate DNA by binding the purine corepressors, hypoxanthine or guanine, thereby effecting transcription repression. The polypeptide is HTH-type transcriptional repressor PurR (Mannheimia succiniciproducens (strain KCTC 0769BP / MBEL55E)).